Here is a 299-residue protein sequence, read N- to C-terminus: MKVLWAVLVVTLLAGCRADAEPELEAQEPAVWQSGQPWELALGRLWDYLRWVQTLSDQVQEELLSSQVTQELTLLMEDTMKEVKAYKAELEQELAPMAEDTRARLSKELQAAQARLGADMEEVRNRLAQYRGEVQAMLGQSAEELRARLASHLRKMRKRLLRDAEDLQKRLAVYKAGAREGAERGVSAIRERLASLVEQGRLRSALTSQPLRERAQAWGERLRGRLEEVGGQARDRLDVVREQMEEVRAKVEEQAEAFQARLKGWFEPMVEDMRRQWADLIEKVQVAVGASTPAPSQKP.

The signal sequence occupies residues 1–18; that stretch reads MKVLWAVLVVTLLAGCRA. 7 tandem repeats follow at residues 74–95, 96–117, 118–139, 140–161, 162–183, 184–205, and 224–245. The interval 74–245 is 8 X 22 AA approximate tandem repeats; it reads LLMEDTMKEV…RLDVVREQME (172 aa). Met137 carries the post-translational modification Methionine sulfoxide. Position 141 is a phosphoserine (Ser141). Residues 152–162 form an LDL and other lipoprotein receptors binding region; it reads HLRKMRKRLLR. Residue 156–159 coordinates heparin; it reads MRKR. A lipid-binding and lipoprotein association region spans residues 204–273; it reads SALTSQPLRE…GWFEPMVEDM (70 aa). 219–226 contacts heparin; the sequence is GERLRGRL. Residues 261–273 form a specificity for association with VLDL region; that stretch reads RLKGWFEPMVEDM.

This sequence belongs to the apolipoprotein A1/A4/E family. In terms of assembly, homotetramer. May interact with ABCA1; functionally associated with ABCA1 in the biogenesis of HDLs. May interact with APP/A4 amyloid-beta peptide; the interaction is extremely stable in vitro but its physiological significance is unclear. May interact with MAPT. May interact with MAP2. In the cerebrospinal fluid, interacts with secreted SORL1. Interacts with PMEL; this allows the loading of PMEL luminal fragment on ILVs to induce fibril nucleation. Post-translationally, APOE exists as multiple glycosylated and sialylated glycoforms within cells and in plasma. The extent of glycosylation and sialylation are tissue and context specific. In terms of processing, glycated in plasma VLDL. Phosphorylated by FAM20C in the extracellular medium.

The protein localises to the secreted. It localises to the extracellular space. Its subcellular location is the extracellular matrix. The protein resides in the extracellular vesicle. It is found in the endosome. The protein localises to the multivesicular body. Functionally, APOE is an apolipoprotein, a protein associating with lipid particles, that mainly functions in lipoprotein-mediated lipid transport between organs via the plasma and interstitial fluids. APOE is a core component of plasma lipoproteins and is involved in their production, conversion and clearance. Apolipoproteins are amphipathic molecules that interact both with lipids of the lipoprotein particle core and the aqueous environment of the plasma. As such, APOE associates with chylomicrons, chylomicron remnants, very low density lipoproteins (VLDL) and intermediate density lipoproteins (IDL) but shows a preferential binding to high-density lipoproteins (HDL). It also binds a wide range of cellular receptors including the LDL receptor/LDLR, the LDL receptor-related proteins LRP1, LRP2 and LRP8 and the very low-density lipoprotein receptor/VLDLR that mediate the cellular uptake of the APOE-containing lipoprotein particles. Finally, APOE also has a heparin-binding activity and binds heparan-sulfate proteoglycans on the surface of cells, a property that supports the capture and the receptor-mediated uptake of APOE-containing lipoproteins by cells. A main function of APOE is to mediate lipoprotein clearance through the uptake of chylomicrons, VLDLs, and HDLs by hepatocytes. APOE is also involved in the biosynthesis by the liver of VLDLs as well as their uptake by peripheral tissues ensuring the delivery of triglycerides and energy storage in muscle, heart and adipose tissues. By participating in the lipoprotein-mediated distribution of lipids among tissues, APOE plays a critical role in plasma and tissues lipid homeostasis. APOE is also involved in two steps of reverse cholesterol transport, the HDLs-mediated transport of cholesterol from peripheral tissues to the liver, and thereby plays an important role in cholesterol homeostasis. First, it is functionally associated with ABCA1 in the biogenesis of HDLs in tissues. Second, it is enriched in circulating HDLs and mediates their uptake by hepatocytes. APOE also plays an important role in lipid transport in the central nervous system, regulating neuron survival and sprouting. The sequence is that of Apolipoprotein E (APOE) from Erethizon dorsatum (North American porcupine).